Reading from the N-terminus, the 241-residue chain is 1-(5-phosphoribosyl)-5-[(5-phosphoribosylamino)methylideneamino] imidazole-4-carboxamide isomerase (241 aa).

The active-site Proton acceptor is the aspartate 10. The active-site Proton donor is the aspartate 129.

The protein belongs to the HisA/HisF family.

Its subcellular location is the cytoplasm. The enzyme catalyses 1-(5-phospho-beta-D-ribosyl)-5-[(5-phospho-beta-D-ribosylamino)methylideneamino]imidazole-4-carboxamide = 5-[(5-phospho-1-deoxy-D-ribulos-1-ylimino)methylamino]-1-(5-phospho-beta-D-ribosyl)imidazole-4-carboxamide. Its pathway is amino-acid biosynthesis; L-histidine biosynthesis; L-histidine from 5-phospho-alpha-D-ribose 1-diphosphate: step 4/9. In Salinispora tropica (strain ATCC BAA-916 / DSM 44818 / JCM 13857 / NBRC 105044 / CNB-440), this protein is 1-(5-phosphoribosyl)-5-[(5-phosphoribosylamino)methylideneamino] imidazole-4-carboxamide isomerase.